Here is a 527-residue protein sequence, read N- to C-terminus: MLMLLVFGVLLHEVPLSGQDKAHSEADDAPGKALYDYSSLRLPAEHIPFFLHNNRHVASVCREDSHCPYKKHLENLNYCWGYEKSCAPEFRFGSPVCSYVDLGWTDTLESAQDMFWRQADFGYARERLGEIRTICQPERASDSSLVCSRYLQYCRATGLYLDLRNIKRNHDRFKEDFLQGGEIGGYCKLDSHALVSEGQRKSPLQSWFAELQGYTQLNFRPIEDAKCDIVVEKPTYFMKLDAGINMYHHFCDFLNLYLTQHVNNSFSTDVYIVMWDTSTYGYGDLFSDTWKAFTDYDVIHLKTYDSKKVCFKEAVFSLLPRMRYGLFYNTPLISGCQNTGLFRAFSQHVLHRLNITQEGPKDGKVRVTILARSTEYRKILNQDELVNALKTVSTFEVRVVDYKYRELGFLDQLRITHNTDIFIGMHGAGLTHLLFLPDWAAVFELYNCEDERCYLDLARLRGIHYITWRKPSKVFPQDKGHHPTLGEHPKFTNYSFDVEEFMYLVLQAAEHVLQHPQWPFKKKHDEL.

The first 19 residues, 1-19 (MLMLLVFGVLLHEVPLSGQ), serve as a signal peptide directing secretion. The short motif at 295–297 (DYD) is the Required for optimal activity element. A glycan (N-linked (GlcNAc...) asparagine) is linked at Asn354. Residues 524–527 (HDEL) carry the Prevents secretion from ER motif.

It belongs to the glycosyltransferase 61 family. As to expression, widely expressed. Expressed in brain, heart, kidney, lung, skeletal muscles and thymus. Highest expression is observed in lung and the lowest in skeletal muscles.

The protein localises to the endoplasmic reticulum lumen. The catalysed reaction is L-seryl-[protein] + UDP-N-acetyl-alpha-D-glucosamine = 3-O-(N-acetyl-beta-D-glucosaminyl)-L-seryl-[protein] + UDP + H(+). It carries out the reaction L-threonyl-[protein] + UDP-N-acetyl-alpha-D-glucosamine = 3-O-(N-acetyl-beta-D-glucosaminyl)-L-threonyl-[protein] + UDP + H(+). Its function is as follows. Catalyzes the transfer of a single N-acetylglucosamine from UDP-GlcNAc to a serine or threonine residue in extracellular proteins resulting in their modification with a beta-linked N-acetylglucosamine (O-GlcNAc). Specifically glycosylates the Thr residue located between the fifth and sixth conserved cysteines of folded EGF-like domains. The sequence is that of EGF domain-specific O-linked N-acetylglucosamine transferase (Eogt) from Mus musculus (Mouse).